Reading from the N-terminus, the 310-residue chain is 2-ketogluconate reductase (310 aa).

NADP(+) is bound by residues 151–152 (HI) and 227–229 (IAR). Active-site residues include Arg-229 and Glu-258. His-276 functions as the Proton donor in the catalytic mechanism.

This sequence belongs to the D-isomer specific 2-hydroxyacid dehydrogenase family. Homohexamer.

It carries out the reaction D-gluconate + NADP(+) = 2-dehydro-D-gluconate + NADPH + H(+). Functionally, catalyzes the reduction of 2-keto-D-gluconate to gluconate. Can also catalyze the reduction of 2-keto-L-gulonate. Can use both NADH and NADPH efficiently, with a slight preference for NADPH. The polypeptide is 2-ketogluconate reductase (Gluconobacter oxydans (strain 621H) (Gluconobacter suboxydans)).